The sequence spans 483 residues: Cysteine proteinase 1, mitochondrial (483 aa).

A mitochondrion-targeting transit peptide spans 1–30 (MLPTSVSRSLYLKTFRSHLLRAPQIVLKRM). Residues Cys102, His398, and Asn421 contribute to the active site. Position 483 (Lys483) is a propeptide, removed in mature form; by autocatalysis.

It belongs to the peptidase C1 family. As to quaternary structure, homohexamer. Binds to nucleic acids. Binds single-stranded DNA and RNA with higher affinity than double-stranded DNA. In terms of processing, the N-terminus of isoform Cytoplasmic is blocked.

The protein localises to the mitochondrion. It localises to the cytoplasm. The catalysed reaction is Inactivates bleomycin B2 (a cytotoxic glycometallopeptide) by hydrolysis of a carboxyamide bond of beta-aminoalanine, but also shows general aminopeptidase activity. The specificity varies somewhat with source, but amino acid arylamides of Met, Leu and Ala are preferred.. Its activity is regulated as follows. Inhibited by E64, a specific inhibitor of cysteine proteases, N-ethylmaleimide, iodacetamide, and mercury and zinc ions. Its function is as follows. The normal physiological role of the enzyme is unknown, but it is not essential for the viability of yeast cells. Has aminopeptidase activity, shortening substrate peptides sequentially by 1 amino acid. Has bleomycin hydrolase activity, which can protect the cell from the toxic effects of bleomycin. Has homocysteine-thiolactonase activity, protecting the cell against homocysteine toxicity. Acts as a repressor in the GAL4 regulatory system, but this does not require either the peptidase or nucleic acid-binding activities. This Saccharomyces cerevisiae (strain JAY291) (Baker's yeast) protein is Cysteine proteinase 1, mitochondrial (LAP3).